Consider the following 361-residue polypeptide: Aminomethyltransferase (361 aa).

The protein belongs to the GcvT family. The glycine cleavage system is composed of four proteins: P, T, L and H.

It catalyses the reaction N(6)-[(R)-S(8)-aminomethyldihydrolipoyl]-L-lysyl-[protein] + (6S)-5,6,7,8-tetrahydrofolate = N(6)-[(R)-dihydrolipoyl]-L-lysyl-[protein] + (6R)-5,10-methylene-5,6,7,8-tetrahydrofolate + NH4(+). Its function is as follows. The glycine cleavage system catalyzes the degradation of glycine. The protein is Aminomethyltransferase of Herpetosiphon aurantiacus (strain ATCC 23779 / DSM 785 / 114-95).